The sequence spans 118 residues: Large ribosomal subunit protein bL19 (118 aa).

The protein belongs to the bacterial ribosomal protein bL19 family.

Its function is as follows. This protein is located at the 30S-50S ribosomal subunit interface and may play a role in the structure and function of the aminoacyl-tRNA binding site. This is Large ribosomal subunit protein bL19 from Salinispora arenicola (strain CNS-205).